We begin with the raw amino-acid sequence, 312 residues long: Malate dehydrogenase (312 aa).

NAD(+) is bound by residues 7 to 13 (GAAGGIG) and D34. Positions 81 and 87 each coordinate substrate. NAD(+) contacts are provided by residues N94 and 117–119 (ITN). Substrate-binding residues include N119 and R153. H177 serves as the catalytic Proton acceptor. M227 is a binding site for NAD(+).

It belongs to the LDH/MDH superfamily. MDH type 1 family. In terms of assembly, homodimer.

It catalyses the reaction (S)-malate + NAD(+) = oxaloacetate + NADH + H(+). Its function is as follows. Catalyzes the reversible oxidation of malate to oxaloacetate. This Escherichia coli O6:K15:H31 (strain 536 / UPEC) protein is Malate dehydrogenase.